Reading from the N-terminus, the 187-residue chain is Elongation factor P (187 aa).

It belongs to the elongation factor P family.

It is found in the cytoplasm. The protein operates within protein biosynthesis; polypeptide chain elongation. Functionally, involved in peptide bond synthesis. Stimulates efficient translation and peptide-bond synthesis on native or reconstituted 70S ribosomes in vitro. Probably functions indirectly by altering the affinity of the ribosome for aminoacyl-tRNA, thus increasing their reactivity as acceptors for peptidyl transferase. In Roseiflexus sp. (strain RS-1), this protein is Elongation factor P.